The chain runs to 196 residues: Nucleoside triphosphate pyrophosphatase (196 aa).

D73 acts as the Proton acceptor in catalysis.

This sequence belongs to the Maf family. The cofactor is a divalent metal cation.

It localises to the cytoplasm. It carries out the reaction a ribonucleoside 5'-triphosphate + H2O = a ribonucleoside 5'-phosphate + diphosphate + H(+). It catalyses the reaction a 2'-deoxyribonucleoside 5'-triphosphate + H2O = a 2'-deoxyribonucleoside 5'-phosphate + diphosphate + H(+). Functionally, nucleoside triphosphate pyrophosphatase. May have a dual role in cell division arrest and in preventing the incorporation of modified nucleotides into cellular nucleic acids. In Maricaulis maris (strain MCS10) (Caulobacter maris), this protein is Nucleoside triphosphate pyrophosphatase.